Reading from the N-terminus, the 895-residue chain is Catenin alpha-3 (895 aa).

A coiled-coil region spans residues 74–107 (EMIAKEATVLKEELAAALQEVRKESKALKVSAER). S160 bears the Phosphoserine mark. Residues 325–379 (RERIIAECNAIRQALQDLLTEYMSNTGKTERSNTLNTAIVNMSKKTRDLRRQLRK) are a coiled coil. The residue at position 361 (T361) is a Phosphothreonine. Residues 635 to 660 (DVSDLEDDHEVRSHTSIQTEGKTDRA) are disordered. Phosphoserine is present on residues S637 and S647. Phosphothreonine is present on T649.

The protein belongs to the vinculin/alpha-catenin family. In terms of assembly, interacts with CTNNB1. Interacts with PKP2. Expressed in heart (at protein level).

The protein resides in the cytoplasm. Its subcellular location is the cytoskeleton. The protein localises to the cell junction. It is found in the desmosome. Functionally, may be involved in formation of stretch-resistant cell-cell adhesion complexes. The sequence is that of Catenin alpha-3 from Mus musculus (Mouse).